A 108-amino-acid polypeptide reads, in one-letter code: UPF0102 protein SO_0299 (108 aa).

This sequence belongs to the UPF0102 family.

This chain is UPF0102 protein SO_0299, found in Shewanella oneidensis (strain ATCC 700550 / JCM 31522 / CIP 106686 / LMG 19005 / NCIMB 14063 / MR-1).